A 247-amino-acid polypeptide reads, in one-letter code: Ubiquinone biosynthesis O-methyltransferase (247 aa).

S-adenosyl-L-methionine is bound by residues Arg40, Gly71, Asp92, and Met135.

Belongs to the methyltransferase superfamily. UbiG/COQ3 family.

The enzyme catalyses a 3-demethylubiquinol + S-adenosyl-L-methionine = a ubiquinol + S-adenosyl-L-homocysteine + H(+). The catalysed reaction is a 3-(all-trans-polyprenyl)benzene-1,2-diol + S-adenosyl-L-methionine = a 2-methoxy-6-(all-trans-polyprenyl)phenol + S-adenosyl-L-homocysteine + H(+). The protein operates within cofactor biosynthesis; ubiquinone biosynthesis. Its function is as follows. O-methyltransferase that catalyzes the 2 O-methylation steps in the ubiquinone biosynthetic pathway. The sequence is that of Ubiquinone biosynthesis O-methyltransferase from Ruegeria sp. (strain TM1040) (Silicibacter sp.).